A 284-amino-acid polypeptide reads, in one-letter code: MYVVSTKQMLNNAQRGGYAVPAFNIHNLETMQVVVETAASMHAPVIIAGTPGTFTHVGTENLMALVSAMAKQYHHPLAIHLDHHTKFDDIAQKVRSGVRSVMIDASHLPFAQNISRVKEVVDFCHRFDVSVEAELGQLGGQEDDVQVNEADAFYTNPVQAREFAEATGIDSLAVAIGTAHGMYARAPALDFSRLENIRQWVNLPLVLHGASGLSTKDIQQTIKLGICKINVATELKNAFSQALKNYLTEHPEATDPRDYLQSAKSAMRDVVSKVIADCGCEGRA.

The active-site Proton donor is aspartate 82. Zn(2+) contacts are provided by histidine 83 and histidine 180. Glycine 181 provides a ligand contact to dihydroxyacetone phosphate. Histidine 208 contributes to the Zn(2+) binding site. Dihydroxyacetone phosphate-binding positions include 209 to 211 and 230 to 233; these read GAS and NVAT.

It belongs to the class II fructose-bisphosphate aldolase family. TagBP aldolase GatY subfamily. Forms a complex with GatZ. Zn(2+) serves as cofactor.

It carries out the reaction D-tagatofuranose 1,6-bisphosphate = D-glyceraldehyde 3-phosphate + dihydroxyacetone phosphate. It participates in carbohydrate metabolism; D-tagatose 6-phosphate degradation; D-glyceraldehyde 3-phosphate and glycerone phosphate from D-tagatose 6-phosphate: step 2/2. In terms of biological role, catalytic subunit of the tagatose-1,6-bisphosphate aldolase GatYZ, which catalyzes the reversible aldol condensation of dihydroxyacetone phosphate (DHAP or glycerone-phosphate) with glyceraldehyde 3-phosphate (G3P) to produce tagatose 1,6-bisphosphate (TBP). Requires GatZ subunit for full activity and stability. Is involved in the catabolism of galactitol. This Escherichia coli O6:K15:H31 (strain 536 / UPEC) protein is D-tagatose-1,6-bisphosphate aldolase subunit GatY.